A 665-amino-acid polypeptide reads, in one-letter code: UvrABC system protein B (665 aa).

The Helicase ATP-binding domain maps to 31 to 414; it reads DGVKGGEKAQ…EMEQTETVVQ (384 aa). 44–51 contributes to the ATP binding site; sequence GATGTGKT. Positions 97 to 120 match the Beta-hairpin motif; that stretch reads YYDYYQPEAYVPSSDTYIEKDSSI. The Helicase C-terminal domain occupies 435 to 601; that stretch reads QIDDLVGEIH…TIIKEIRDLI (167 aa). The UVR domain occupies 629 to 664; the sequence is ADLLMKLEREMKDAAKALDFETAATLRDTILELKAA.

This sequence belongs to the UvrB family. As to quaternary structure, forms a heterotetramer with UvrA during the search for lesions. Interacts with UvrC in an incision complex.

The protein resides in the cytoplasm. In terms of biological role, the UvrABC repair system catalyzes the recognition and processing of DNA lesions. A damage recognition complex composed of 2 UvrA and 2 UvrB subunits scans DNA for abnormalities. Upon binding of the UvrA(2)B(2) complex to a putative damaged site, the DNA wraps around one UvrB monomer. DNA wrap is dependent on ATP binding by UvrB and probably causes local melting of the DNA helix, facilitating insertion of UvrB beta-hairpin between the DNA strands. Then UvrB probes one DNA strand for the presence of a lesion. If a lesion is found the UvrA subunits dissociate and the UvrB-DNA preincision complex is formed. This complex is subsequently bound by UvrC and the second UvrB is released. If no lesion is found, the DNA wraps around the other UvrB subunit that will check the other stand for damage. The chain is UvrABC system protein B from Enterococcus faecalis (strain ATCC 700802 / V583).